The following is a 211-amino-acid chain: 2,3-bisphosphoglycerate-dependent phosphoglycerate mutase (211 aa).

Substrate-binding positions include 9–16, 22–23, arginine 61, 88–91, lysine 99, 115–116, and 159–160; these read RHGQSDWN, TG, ERDY, RR, and GN. The active-site Tele-phosphohistidine intermediate is the histidine 10. Residue glutamate 88 is the Proton donor/acceptor of the active site.

This sequence belongs to the phosphoglycerate mutase family. BPG-dependent PGAM subfamily. As to quaternary structure, homodimer.

It catalyses the reaction (2R)-2-phosphoglycerate = (2R)-3-phosphoglycerate. The protein operates within carbohydrate degradation; glycolysis; pyruvate from D-glyceraldehyde 3-phosphate: step 3/5. Catalyzes the interconversion of 2-phosphoglycerate and 3-phosphoglycerate. The chain is 2,3-bisphosphoglycerate-dependent phosphoglycerate mutase from Rhizobium rhizogenes (strain K84 / ATCC BAA-868) (Agrobacterium radiobacter).